The sequence spans 360 residues: MSSPKEPLSVVVAGGGTAGHIEPALAVAEALRDGYGATVTALGTARGLETSLVPDRGFDLRLIEPVPVPRTPNLDLVKLPFRVAKSLRQARQVLRDTGAHAVVGFGGYVSAPAYLAARSLGIPFFVHEANARAGMANKLGVRLGGVGLNATENSGMPGQVVGIPIRRELAGGEDATAAERGRTQWGLEADRPTVLVTGGSQGSVSINSAVAGALDDLLGAGIQVLHAVGKRNSLPTARPGYVPVPFIEDMQAAYAVADLIVCRSGAMTVAEVTASGIPAIYVPLPHGNGEQALNASAVIAAGAAKLVDDADLTPQRLVSEVRDIVGNPATLHRMSAAARTSTVGDAAGVIAGLVATAAGY.

UDP-N-acetyl-alpha-D-glucosamine is bound by residues 17 to 19, Asn130, Arg166, Ser200, Ile247, and Gln291; that span reads TAG.

It belongs to the glycosyltransferase 28 family. MurG subfamily.

The protein localises to the cell membrane. The enzyme catalyses di-trans,octa-cis-undecaprenyl diphospho-N-acetyl-alpha-D-muramoyl-L-alanyl-D-glutamyl-meso-2,6-diaminopimeloyl-D-alanyl-D-alanine + UDP-N-acetyl-alpha-D-glucosamine = di-trans,octa-cis-undecaprenyl diphospho-[N-acetyl-alpha-D-glucosaminyl-(1-&gt;4)]-N-acetyl-alpha-D-muramoyl-L-alanyl-D-glutamyl-meso-2,6-diaminopimeloyl-D-alanyl-D-alanine + UDP + H(+). Its pathway is cell wall biogenesis; peptidoglycan biosynthesis. Functionally, cell wall formation. Catalyzes the transfer of a GlcNAc subunit on undecaprenyl-pyrophosphoryl-MurNAc-pentapeptide (lipid intermediate I) to form undecaprenyl-pyrophosphoryl-MurNAc-(pentapeptide)GlcNAc (lipid intermediate II). The protein is UDP-N-acetylglucosamine--N-acetylmuramyl-(pentapeptide) pyrophosphoryl-undecaprenol N-acetylglucosamine transferase of Corynebacterium efficiens (strain DSM 44549 / YS-314 / AJ 12310 / JCM 11189 / NBRC 100395).